Here is a 316-residue protein sequence, read N- to C-terminus: Methionyl-tRNA formyltransferase (316 aa).

Residue 111-114 (GLLP) coordinates (6S)-5,6,7,8-tetrahydrofolate.

It belongs to the Fmt family.

The enzyme catalyses L-methionyl-tRNA(fMet) + (6R)-10-formyltetrahydrofolate = N-formyl-L-methionyl-tRNA(fMet) + (6S)-5,6,7,8-tetrahydrofolate + H(+). In terms of biological role, attaches a formyl group to the free amino group of methionyl-tRNA(fMet). The formyl group appears to play a dual role in the initiator identity of N-formylmethionyl-tRNA by promoting its recognition by IF2 and preventing the misappropriation of this tRNA by the elongation apparatus. The sequence is that of Methionyl-tRNA formyltransferase from Chlamydia trachomatis serovar L2b (strain UCH-1/proctitis).